Here is a 1259-residue protein sequence, read N- to C-terminus: Neural cell adhesion molecule L1 (1259 aa).

The first 19 residues, 1-19 (MVMMLWYVLPLLLCSPCLL), serve as a signal peptide directing secretion. Over 20 to 1122 (IQIPDEYKGH…VSTTGSFASE (1103 aa)) the chain is Extracellular. 6 Ig-like C2-type domains span residues 35–128 (PVIT…HEIQ), 138–225 (PKET…EPID), 239–327 (PRLL…YYVT), 332–419 (PYWL…AYIY), 424–506 (PARI…NNVT), and 517–600 (TQIT…DEVE). Cystine bridges form between cysteine 57/cysteine 113 and cysteine 157/cysteine 208. 4 N-linked (GlcNAc...) asparagine glycosylation sites follow: asparagine 100, asparagine 202, asparagine 246, and asparagine 293. Disulfide bonds link cysteine 263-cysteine 311 and cysteine 353-cysteine 403. Asparagine 432, asparagine 489, and asparagine 504 each carry an N-linked (GlcNAc...) asparagine glycan. Cysteine 447 and cysteine 496 are oxidised to a cystine. An intrachain disulfide couples cysteine 538 to cysteine 590. 2 consecutive short sequence motifs (cell attachment site) follow at residues 553–555 (RGD) and 562–564 (RGD). Fibronectin type-III domains lie at 613–711 (PVPH…TPEA), 716–809 (NPVD…SGED), 811–916 (PQVS…PEGV), 919–1014 (HPEA…MALF), and 1016–1116 (KPDF…VSTT). An N-linked (GlcNAc...) asparagine glycan is attached at asparagine 670. The segment at 697-724 (GEPSPVSETVVTPEAAPEKNPVDVRGEG) is disordered. Basic and acidic residues predominate over residues 712 to 724 (APEKNPVDVRGEG). 11 N-linked (GlcNAc...) asparagine glycosylation sites follow: asparagine 725, asparagine 776, asparagine 824, asparagine 848, asparagine 875, asparagine 968, asparagine 978, asparagine 1021, asparagine 1029, asparagine 1072, and asparagine 1106. Residues 1123–1145 (GWFIAFVSAIILLLLILLILCFI) form a helical membrane-spanning segment. Residues 1146–1259 (KRSKGGKYSV…SPINPAVALE (114 aa)) are Cytoplasmic-facing. Serine 1165, arginine 1179, serine 1180, serine 1183, serine 1196, serine 1245, serine 1246, and serine 1250 each carry phosphoserine. 2 disordered regions span residues 1182-1209 (ESDN…SDDS) and 1228-1259 (IGQY…VALE). A compositionally biased stretch (polar residues) spans 1243–1252 (NDSSGATSPI).

It belongs to the immunoglobulin superfamily. L1/neurofascin/NgCAM family. As to quaternary structure, interacts with SHTN1; the interaction occurs in axonal growth cones. Interacts with isoform 2 of BSG. As to expression, isoform 2 is predominantly found in the brain, while isoform 1 is found in the peripheral nervous system.

The protein localises to the cell membrane. It is found in the cell projection. The protein resides in the growth cone. Functionally, neural cell adhesion molecule involved in the dynamics of cell adhesion and in the generation of transmembrane signals at tyrosine kinase receptors. During brain development, critical in multiple processes, including neuronal migration, axonal growth and fasciculation, and synaptogenesis. In the mature brain, plays a role in the dynamics of neuronal structure and function, including synaptic plasticity. This Rattus norvegicus (Rat) protein is Neural cell adhesion molecule L1 (L1cam).